Consider the following 79-residue polypeptide: Toxin ICK-20 (79 aa).

An N-terminal signal peptide occupies residues 1–20 (MMKYFLVLCLVVLGVAAVQA). Cystine bridges form between Cys43/Cys57, Cys50/Cys61, Cys56/Cys78, and Cys68/Cys74. An N-linked (GlcNAc...) asparagine glycan is attached at Asn71.

It belongs to the neurotoxin 13 (insecticidal toxin ABC) family. ICK-21 subfamily. Expressed by the venom gland.

It localises to the secreted. Its function is as follows. Ion channel inhibitor. This chain is Toxin ICK-20, found in Trittame loki (Brush-footed trapdoor spider).